Reading from the N-terminus, the 66-residue chain is Large ribosomal subunit protein bL35 (66 aa).

Positions Met1–Arg16 are enriched in basic residues. The segment at Met1–Phe28 is disordered.

Belongs to the bacterial ribosomal protein bL35 family.

The polypeptide is Large ribosomal subunit protein bL35 (Staphylococcus epidermidis (strain ATCC 35984 / DSM 28319 / BCRC 17069 / CCUG 31568 / BM 3577 / RP62A)).